Reading from the N-terminus, the 181-residue chain is Trafficking protein particle complex subunit 3 homolog (181 aa).

Residue C70 is the site of S-palmitoyl cysteine attachment.

Belongs to the TRAPP small subunits family. BET3 subfamily. Homodimer. Part of the multisubunit TRAPP (transport protein particle) complex.

It localises to the golgi apparatus. It is found in the cis-Golgi network. The protein localises to the endoplasmic reticulum. In terms of biological role, may play a role in vesicular transport from endoplasmic reticulum to Golgi. Required for the systemic spread of the RNAi response. This Caenorhabditis briggsae protein is Trafficking protein particle complex subunit 3 homolog.